The chain runs to 319 residues: ATP-dependent 6-phosphofructokinase (319 aa).

G11 provides a ligand contact to ATP. 21 to 25 (RAAVR) is a binding site for ADP. Residues 72 to 73 (RS) and 102 to 105 (GDGS) contribute to the ATP site. D103 lines the Mg(2+) pocket. Residue 125–127 (TID) coordinates substrate. The active-site Proton acceptor is the D127. An ADP-binding site is contributed by R154. Residues R162 and 169 to 171 (MGR) each bind substrate. ADP is bound by residues 185–187 (GAE), R211, and 213–215 (KKH). Substrate contacts are provided by residues E222, R243, and 249–252 (HIQR).

This sequence belongs to the phosphofructokinase type A (PFKA) family. ATP-dependent PFK group I subfamily. Prokaryotic clade 'B1' sub-subfamily. In terms of assembly, homotetramer. The cofactor is Mg(2+).

The protein localises to the cytoplasm. It catalyses the reaction beta-D-fructose 6-phosphate + ATP = beta-D-fructose 1,6-bisphosphate + ADP + H(+). The protein operates within carbohydrate degradation; glycolysis; D-glyceraldehyde 3-phosphate and glycerone phosphate from D-glucose: step 3/4. Its activity is regulated as follows. Allosterically activated by ADP and other diphosphonucleosides, and allosterically inhibited by phosphoenolpyruvate. Functionally, catalyzes the phosphorylation of D-fructose 6-phosphate to fructose 1,6-bisphosphate by ATP, the first committing step of glycolysis. In Brevibacillus brevis (strain 47 / JCM 6285 / NBRC 100599), this protein is ATP-dependent 6-phosphofructokinase.